We begin with the raw amino-acid sequence, 396 residues long: Elongation factor Tu (396 aa).

The region spanning 10-206 is the tr-type G domain; it reads KPHCNIGTIG…TVDAYIPQPE (197 aa). The tract at residues 19–26 is G1; that stretch reads GHVDHGKT. 19–26 is a binding site for GTP; the sequence is GHVDHGKT. Position 26 (T26) interacts with Mg(2+). Positions 60 to 64 are G2; the sequence is GITIS. The tract at residues 81-84 is G3; sequence DCPG. Residues 81 to 85 and 136 to 139 contribute to the GTP site; these read DCPGH and NKVD. A G4 region spans residues 136 to 139; sequence NKVD. The G5 stretch occupies residues 174 to 176; it reads SAL.

It belongs to the TRAFAC class translation factor GTPase superfamily. Classic translation factor GTPase family. EF-Tu/EF-1A subfamily. As to quaternary structure, monomer.

It localises to the cytoplasm. The catalysed reaction is GTP + H2O = GDP + phosphate + H(+). Functionally, GTP hydrolase that promotes the GTP-dependent binding of aminoacyl-tRNA to the A-site of ribosomes during protein biosynthesis. The sequence is that of Elongation factor Tu from Methylocella silvestris (strain DSM 15510 / CIP 108128 / LMG 27833 / NCIMB 13906 / BL2).